Reading from the N-terminus, the 326-residue chain is tRNA-modifying protein YgfZ (326 aa).

Folate-binding residues include Trp-27 and Trp-189.

It belongs to the tRNA-modifying YgfZ family.

The protein localises to the cytoplasm. Its function is as follows. Folate-binding protein involved in regulating the level of ATP-DnaA and in the modification of some tRNAs. It is probably a key factor in regulatory networks that act via tRNA modification, such as initiation of chromosomal replication. This Salmonella typhimurium (strain LT2 / SGSC1412 / ATCC 700720) protein is tRNA-modifying protein YgfZ.